The chain runs to 559 residues: (R)-mandelonitrile lyase 1 (559 aa).

An N-terminal signal peptide occupies residues 1 to 27; that stretch reads MEKSTMSVILFVLHLLVLHLQYSEVHS. N-linked (GlcNAc...) asparagine glycosylation is found at asparagine 30 and asparagine 44. FAD is bound by residues 63 to 64, 82 to 83, threonine 133, and 137 to 140; these read TS, ER, and NAGV. 4 N-linked (GlcNAc...) asparagine glycosylation sites follow: asparagine 145, asparagine 162, asparagine 178, and asparagine 218. Residue valine 244 participates in FAD binding. N-linked (GlcNAc...) asparagine glycans are attached at residues asparagine 252, asparagine 255, asparagine 309, asparagine 380, asparagine 402, asparagine 420, and asparagine 467. The cysteines at positions 427 and 478 are disulfide-linked. Tyrosine 485 serves as a coordination point for substrate. 486–487 is a binding site for FAD; that stretch reads WH. Histidine 487 acts as the Proton donor in catalysis. Histidine 525 functions as the Proton acceptor in the catalytic mechanism. 526 to 527 lines the FAD pocket; that stretch reads PQ.

The protein belongs to the GMC oxidoreductase family. Monomer. It depends on FAD as a cofactor.

The catalysed reaction is (R)-mandelonitrile = benzaldehyde + hydrogen cyanide. In terms of biological role, involved in cyanogenesis, the release of HCN from injured tissues. Catalyzes the stereospecific addition of HCN to a variety of aldehydes in vitro. It is a major seed constituent, and could have the additional role of a storage form for reduced nitrogen. The polypeptide is (R)-mandelonitrile lyase 1 (MDL1) (Prunus dulcis (Almond)).